The primary structure comprises 482 residues: Guanine nucleotide exchange factor SRM1 (482 aa).

A compositionally biased stretch (polar residues) spans Met-1–Asp-11. Residues Met-1–Ser-22 are disordered. The short motif at Ala-15–Ala-26 is the Nuclear localization signal element. RCC1 repeat units follow at residues Pro-45 to Glu-101, Ser-103 to Lys-152, Asn-183 to Glu-238, Glu-239 to Lys-291, Asp-292 to Gln-347, Gly-349 to Gln-411, and Asn-412 to Val-466. The segment at Lys-128 to Phe-158 is disordered. Residues Asp-131–Glu-145 show a composition bias toward acidic residues. Residues Ser-135 and Ser-136 each carry the phosphoserine modification.

In terms of assembly, component of a multicomponent complex composed of six to seven proteins, which has a collective molecular mass greater than 150 kDa. Interacts with GSP1 and YRB2. Post-translationally, phosphorylated; possibly by KSP1.

The protein localises to the nucleus. Functionally, guanine nucleotide exchange factor that promotes the exchange of GSP1/GSP2-bound GDP by GTP and controls RNA metabolism and transport. Involved in yeast pheromone response pathway and in mRNA metabolism. Involved in nuclear pore complex (NPC) assembly and required for mRNA and ribosome nuclear export. Binds chromatin and is involved NPC-mediated transcriptional control. This chain is Guanine nucleotide exchange factor SRM1 (SRM1), found in Saccharomyces cerevisiae (strain ATCC 204508 / S288c) (Baker's yeast).